Reading from the N-terminus, the 499-residue chain is Glycerol kinase (499 aa).

T13 serves as a coordination point for ADP. Positions 13, 14, and 15 each coordinate ATP. T13 contacts sn-glycerol 3-phosphate. Position 17 (R17) interacts with ADP. 4 residues coordinate sn-glycerol 3-phosphate: R83, E84, Y135, and D245. Glycerol-binding residues include R83, E84, Y135, D245, and Q246. The ADP site is built by T267 and G310. T267, G310, Q314, and A411 together coordinate ATP. 2 residues coordinate ADP: A411 and N415.

Belongs to the FGGY kinase family.

It carries out the reaction glycerol + ATP = sn-glycerol 3-phosphate + ADP + H(+). It participates in polyol metabolism; glycerol degradation via glycerol kinase pathway; sn-glycerol 3-phosphate from glycerol: step 1/1. Inhibited by fructose 1,6-bisphosphate (FBP). In terms of biological role, key enzyme in the regulation of glycerol uptake and metabolism. Catalyzes the phosphorylation of glycerol to yield sn-glycerol 3-phosphate. This chain is Glycerol kinase, found in Xylella fastidiosa (strain 9a5c).